Reading from the N-terminus, the 423-residue chain is Probable WRKY transcription factor 58 (423 aa).

Disordered regions lie at residues 91 to 128, 142 to 171, and 215 to 284; these read SSAH…AVHG, RNHY…DGYN, and IYKG…GVST. Low complexity-rich tracts occupy residues 99-111 and 144-162; these read QPRQ…PQRP and HYNN…VVNV. The segment at residues 161 to 225 is a DNA-binding region (WRKY 1); that stretch reads NVDKPADDGY…YKGQHDHERP (65 aa). A compositionally biased stretch (acidic residues) spans 259-271; the sequence is DDDDDDDEDDEDL. Positions 300–365 form a DNA-binding region, WRKY 2; the sequence is SEVDLLDDGY…YEGKHNHDVP (66 aa).

The protein localises to the nucleus. Transcription factor. Interacts specifically with the W box (5'-(T)TGAC[CT]-3'), a frequently occurring elicitor-responsive cis-acting element. The protein is Probable WRKY transcription factor 58 (WRKY58) of Arabidopsis thaliana (Mouse-ear cress).